The sequence spans 119 residues: UPF0102 protein FP2501 (119 aa).

This sequence belongs to the UPF0102 family.

The sequence is that of UPF0102 protein FP2501 from Flavobacterium psychrophilum (strain ATCC 49511 / DSM 21280 / CIP 103535 / JIP02/86).